Here is a 412-residue protein sequence, read N- to C-terminus: Odorant receptor 47b (412 aa).

Topologically, residues 1 to 74 (MNDSGYQSNL…NLFIMCNVMT (74 aa)) are cytoplasmic. Residues 75 to 95 (IFWTMFVALPESKNVIEMGDD) form a helical membrane-spanning segment. Residues 96–103 (LVWISGMA) lie on the Extracellular side of the membrane. The helical transmembrane segment at 104–124 (LVFTKIFYMHLRCDEIDELIS) threads the bilayer. The Cytoplasmic segment spans residues 125–169 (DFEYYNRELRPHNIDEEVLGWQRLCYVIESGLYINCFCLVNFFSA). A helical membrane pass occupies residues 170–190 (AIFLQPLLGEGKLPFHSVYPF). Residues 191–229 (QWHRLDLHPYTFWFLYIWQSLTSQHNLMSILMVDMVGIS) lie on the Extracellular side of the membrane. The helical transmembrane segment at 230-250 (TFLQTALNLKLLCIEIRKLGD) threads the bilayer. Residues 251-302 (MEVSDKRFHEEFCRVVRFHQHIIKLVGKANRAFNGAFNAQLMASFSLISIST) lie on the Cytoplasmic side of the membrane. The chain crosses the membrane as a helical span at residues 303 to 323 (FETMAAAAVDPKMAAKFVLLM). The Extracellular portion of the chain corresponds to 324–330 (LVAFIQL). A helical transmembrane segment spans residues 331–351 (SLWCVSGTLVYTQSVEVAQAA). Over 352 to 389 (FDINDWHTKSPGIQRDISFVILRAQKPLMYVAEPFLPF) the chain is Cytoplasmic. The helical transmembrane segment at 390-410 (TLGTYMLVLKNCYRLLALMQE) threads the bilayer. Topologically, residues 411-412 (SM) are extracellular.

It belongs to the insect chemoreceptor superfamily. Heteromeric odorant receptor channel (TC 1.A.69) family. Or49a subfamily. As to quaternary structure, interacts with Orco. Complexes exist early in the endomembrane system in olfactory sensory neurons (OSNs), coupling these complexes to the conserved ciliary trafficking pathway. As to expression, expressed in olfactory sensory neurons in the antenna.

The protein localises to the cell membrane. Odorant receptor which mediates acceptance or avoidance behavior, depending on its substrates. The odorant receptor repertoire encodes a large collection of odor stimuli that vary widely in identity, intensity, and duration. May form a complex with Orco to form odorant-sensing units, providing sensitive and prolonged odorant signaling and calcium permeability. Plays an important role in sociosexual interactions since its enhances courtship in a pheromone-dependent manner. The chain is Odorant receptor 47b (Or47b) from Drosophila melanogaster (Fruit fly).